The primary structure comprises 289 residues: UDP-3-O-acyl-N-acetylglucosamine deacetylase (289 aa).

Zn(2+)-binding residues include H79, H236, and D240. H263 (proton donor) is an active-site residue.

This sequence belongs to the LpxC family. Zn(2+) is required as a cofactor.

The catalysed reaction is a UDP-3-O-[(3R)-3-hydroxyacyl]-N-acetyl-alpha-D-glucosamine + H2O = a UDP-3-O-[(3R)-3-hydroxyacyl]-alpha-D-glucosamine + acetate. Its pathway is glycolipid biosynthesis; lipid IV(A) biosynthesis; lipid IV(A) from (3R)-3-hydroxytetradecanoyl-[acyl-carrier-protein] and UDP-N-acetyl-alpha-D-glucosamine: step 2/6. Its function is as follows. Catalyzes the hydrolysis of UDP-3-O-myristoyl-N-acetylglucosamine to form UDP-3-O-myristoylglucosamine and acetate, the committed step in lipid A biosynthesis. The protein is UDP-3-O-acyl-N-acetylglucosamine deacetylase of Rickettsia typhi (strain ATCC VR-144 / Wilmington).